Here is a 133-residue protein sequence, read N- to C-terminus: Small ribosomal subunit protein eS8 (133 aa).

Residues 1-31 form a disordered region; that stretch reads MGFYQGPDNRKITGGLKGKHRDKRKYEIGNP.

It belongs to the eukaryotic ribosomal protein eS8 family. In terms of assembly, part of the 30S ribosomal subunit.

The chain is Small ribosomal subunit protein eS8 from Saccharolobus solfataricus (strain ATCC 35092 / DSM 1617 / JCM 11322 / P2) (Sulfolobus solfataricus).